The chain runs to 1286 residues: X-linked retinitis pigmentosa GTPase regulator-interacting protein 1 (1286 aa).

The segment at 144-193 (QVGHRQLHTAGAPVPEKPKRGPRDRLSYTAPPSFKEHATNENRGEVASKP) is disordered. Composition is skewed to basic and acidic residues over residues 159–169 (EKPKRGPRDRL) and 177–189 (FKEH…RGEV). Positions 294–584 (KAQLTEVQEA…LEGILRSHDL (291 aa)) form a coiled coil. In terms of domain architecture, C2 spans 781 to 906 (GGRKAQEEEF…AKNESIKGDF (126 aa)). 2 disordered regions span residues 934 to 1008 (SFLK…RKHG) and 1058 to 1108 (EEEE…PMSQ). Composition is skewed to basic and acidic residues over residues 940-960 (AQTK…EEKA), 988-998 (HGGERKEKEHQ), and 1070-1084 (KQKE…KESS). Residues 1085-1096 (EQGSEVSEAQTT) show a composition bias toward polar residues. An interaction with RPGR region spans residues 1091 to 1281 (SEAQTTDSDD…VLHAIYKEMT (191 aa)).

It belongs to the RPGRIP1 family. Forms homodimers and elongated homopolymers. Interacts with RPGR. Interacts with NPHP4. Interacts with NEK4. Interacts with SPATA7. Interacts with CEP290/NPHP6; mediating the association between RPGR and CEP290/NPHP6. As to expression, strong expression in retina, with weaker expression in testis. Expressed in other neurons such as amacrine cells. Colocalizes with RGPR in the outer segment of rod photoreceptors and cone outer segments.

Its subcellular location is the cell projection. It localises to the cilium. May function as scaffolding protein. Required for normal location of RPGR at the connecting cilium of photoreceptor cells. Required for normal disk morphogenesis and disk organization in the outer segment of photoreceptor cells and for survival of photoreceptor cells. The sequence is that of X-linked retinitis pigmentosa GTPase regulator-interacting protein 1 (RPGRIP1) from Homo sapiens (Human).